Here is a 291-residue protein sequence, read N- to C-terminus: 4-hydroxy-tetrahydrodipicolinate synthase (291 aa).

Thr-47 serves as a coordination point for pyruvate. Residue Tyr-136 is the Proton donor/acceptor of the active site. Lys-164 functions as the Schiff-base intermediate with substrate in the catalytic mechanism. Residue Ile-206 participates in pyruvate binding.

It belongs to the DapA family. Homotetramer; dimer of dimers.

The protein resides in the cytoplasm. It carries out the reaction L-aspartate 4-semialdehyde + pyruvate = (2S,4S)-4-hydroxy-2,3,4,5-tetrahydrodipicolinate + H2O + H(+). It participates in amino-acid biosynthesis; L-lysine biosynthesis via DAP pathway; (S)-tetrahydrodipicolinate from L-aspartate: step 3/4. Functionally, catalyzes the condensation of (S)-aspartate-beta-semialdehyde [(S)-ASA] and pyruvate to 4-hydroxy-tetrahydrodipicolinate (HTPA). The polypeptide is 4-hydroxy-tetrahydrodipicolinate synthase (Leuconostoc citreum (strain KM20)).